The sequence spans 239 residues: Uridylate kinase (239 aa).

10 to 13 contributes to the ATP binding site; that stretch reads KLSG. Residue glycine 52 participates in UMP binding. The ATP site is built by glycine 53 and arginine 57. UMP is bound by residues aspartate 72 and 133–140; that span reads TGNPFFTT. 3 residues coordinate ATP: threonine 160, tyrosine 166, and aspartate 169.

This sequence belongs to the UMP kinase family. In terms of assembly, homohexamer.

The protein localises to the cytoplasm. The enzyme catalyses UMP + ATP = UDP + ADP. It functions in the pathway pyrimidine metabolism; CTP biosynthesis via de novo pathway; UDP from UMP (UMPK route): step 1/1. Inhibited by UTP. Catalyzes the reversible phosphorylation of UMP to UDP. The chain is Uridylate kinase from Porphyromonas gingivalis (strain ATCC BAA-308 / W83).